An 806-amino-acid chain; its full sequence is Protein translocase subunit SecA (806 aa).

Residues Q87, 105-109, and D493 contribute to the ATP site; that span reads GEGKT.

The protein belongs to the SecA family. Monomer and homodimer. Part of the essential Sec protein translocation apparatus which comprises SecA, SecYEG and auxiliary proteins SecDF. Other proteins may also be involved.

Its subcellular location is the cell membrane. The protein localises to the cytoplasm. The enzyme catalyses ATP + H2O + cellular proteinSide 1 = ADP + phosphate + cellular proteinSide 2.. In terms of biological role, part of the Sec protein translocase complex. Interacts with the SecYEG preprotein conducting channel. Has a central role in coupling the hydrolysis of ATP to the transfer of proteins into and across the cell membrane, serving as an ATP-driven molecular motor driving the stepwise translocation of polypeptide chains across the membrane. The protein is Protein translocase subunit SecA of Mycoplasma genitalium (strain ATCC 33530 / DSM 19775 / NCTC 10195 / G37) (Mycoplasmoides genitalium).